Consider the following 413-residue polypeptide: Serine hydroxymethyltransferase (413 aa).

(6S)-5,6,7,8-tetrahydrofolate contacts are provided by residues L119 and 123-125; that span reads GHL. K228 carries the N6-(pyridoxal phosphate)lysine modification. E243 contacts (6S)-5,6,7,8-tetrahydrofolate.

Belongs to the SHMT family. In terms of assembly, homodimer. The cofactor is pyridoxal 5'-phosphate.

It localises to the cytoplasm. The enzyme catalyses (6R)-5,10-methylene-5,6,7,8-tetrahydrofolate + glycine + H2O = (6S)-5,6,7,8-tetrahydrofolate + L-serine. The protein operates within one-carbon metabolism; tetrahydrofolate interconversion. It functions in the pathway amino-acid biosynthesis; glycine biosynthesis; glycine from L-serine: step 1/1. Functionally, catalyzes the reversible interconversion of serine and glycine with tetrahydrofolate (THF) serving as the one-carbon carrier. This reaction serves as the major source of one-carbon groups required for the biosynthesis of purines, thymidylate, methionine, and other important biomolecules. Also exhibits THF-independent aldolase activity toward beta-hydroxyamino acids, producing glycine and aldehydes, via a retro-aldol mechanism. The chain is Serine hydroxymethyltransferase from Desulforamulus reducens (strain ATCC BAA-1160 / DSM 100696 / MI-1) (Desulfotomaculum reducens).